The primary structure comprises 184 residues: ATP synthase subunit b 1 (184 aa).

The chain crosses the membrane as a helical span at residues 4–24 (LSILAALAASPAMAATGPFFS).

Belongs to the ATPase B chain family. As to quaternary structure, F-type ATPases have 2 components, F(1) - the catalytic core - and F(0) - the membrane proton channel. F(1) has five subunits: alpha(3), beta(3), gamma(1), delta(1), epsilon(1). F(0) has three main subunits: a(1), b(2) and c(10-14). The alpha and beta chains form an alternating ring which encloses part of the gamma chain. F(1) is attached to F(0) by a central stalk formed by the gamma and epsilon chains, while a peripheral stalk is formed by the delta and b chains.

It localises to the cell inner membrane. Its function is as follows. F(1)F(0) ATP synthase produces ATP from ADP in the presence of a proton or sodium gradient. F-type ATPases consist of two structural domains, F(1) containing the extramembraneous catalytic core and F(0) containing the membrane proton channel, linked together by a central stalk and a peripheral stalk. During catalysis, ATP synthesis in the catalytic domain of F(1) is coupled via a rotary mechanism of the central stalk subunits to proton translocation. Functionally, component of the F(0) channel, it forms part of the peripheral stalk, linking F(1) to F(0). This chain is ATP synthase subunit b 1, found in Cereibacter sphaeroides (strain ATCC 17025 / ATH 2.4.3) (Rhodobacter sphaeroides).